A 266-amino-acid chain; its full sequence is Glucosamine-6-phosphate deaminase (266 aa).

The active-site Proton acceptor; for enolization step is Asp72. The For ring-opening step role is filled by Asp141. Residue His143 is the Proton acceptor; for ring-opening step of the active site. The active-site For ring-opening step is the Glu148.

The protein belongs to the glucosamine/galactosamine-6-phosphate isomerase family. NagB subfamily. In terms of assembly, homohexamer.

It carries out the reaction alpha-D-glucosamine 6-phosphate + H2O = beta-D-fructose 6-phosphate + NH4(+). It functions in the pathway amino-sugar metabolism; N-acetylneuraminate degradation; D-fructose 6-phosphate from N-acetylneuraminate: step 5/5. With respect to regulation, allosterically activated by N-acetylglucosamine 6-phosphate (GlcNAc6P). Functionally, catalyzes the reversible isomerization-deamination of glucosamine 6-phosphate (GlcN6P) to form fructose 6-phosphate (Fru6P) and ammonium ion. In Yersinia enterocolitica serotype O:8 / biotype 1B (strain NCTC 13174 / 8081), this protein is Glucosamine-6-phosphate deaminase.